Here is a 352-residue protein sequence, read N- to C-terminus: MESAIDTHLKCPRTLSRRVPEEYQPPFPMWVARADEQLQQVVMGYLGVQYRGEAQREAALQAMRHIVSSFSLPDGPQTHDLTHHTDSSGFDNLMVVGYWKDPAAHCRWLRSAEVNDWWTSQDRLGEGLGYFREISAPRAEQFETLYAFQDNLPGVGAVMDSTSGEIEEHGYWGSMRDRFPISQTDWMKPTNELQVVAGDPAKGGRVVIMGHDNIALIRSGQDWADAEAEERSLYLDEILPTLQDGMDFLRDNGQPLGCYSNRFVRNIDLDGNFLDVSYNIGHWRSLEKLERWAESHPTHLRIFVTFFRVAAGLKKLRLYHEVSVSDAKSQVFEYINCHPHTGMLRDAVVAPT.

Ser-219 lines the an aliphatic aldoxime pocket. Position 299 (His-299) interacts with heme b. An aliphatic aldoxime is bound at residue His-320. His-320 is a catalytic residue.

The protein belongs to the heme-containing dehydratase family. In terms of assembly, homodimer. Heme b is required as a cofactor. Ca(2+) serves as cofactor.

It catalyses the reaction an aliphatic aldoxime = a nitrile + H2O. Active when the heme iron is in the ferrous state. Is very sensitive to AgNO(3), is also inhibited by hydroxylamine and phenylhydrazine, and hardly inhibited by thiol reagents. Not sensitive to chelating agents and serine-modifying reagents. Catalyzes the dehydration of aldoximes to their corresponding nitrile. Aliphatic aldoximes are more effective substrates than aromatic aldoximes. Shows high activity with butyraldoxime and acetaldoxime, but only weak activity with the aromatic aldoxime pyridine-2-aldoxime. Cannot use benzaldoxime, isonitrosoacetophenone and pyridine-4-aldoxime. Is involved in the metabolism of aldoxime in vivo. This Pseudomonas chlororaphis (Pseudomonas aureofaciens) protein is Aliphatic aldoxime dehydratase.